A 617-amino-acid polypeptide reads, in one-letter code: E3 ubiquitin-protein ligase ORTHRUS 1 (617 aa).

The segment at 12–62 (DGVCMRCQVNPPSEETLTCGTCVTPWHVPCLLPESLASSTGEWECPDCSGV) adopts a PHD-type zinc-finger fold. An RING-type 1 zinc finger spans residues 129 to 169 (CSICIQLPERPITTPCGHNFCLKCFEKWAVGQGKLTCMICR). A YDG domain is found at 258–407 (TRKQGVLVGE…FKVCRYLFVR (150 aa)). An RING-type 2 zinc finger spans residues 495 to 552 (CQICREVLSLPVTTPCAHNFCKACLEAKFAGITQLRERSNGGRKLRAKKNIMTCPCCT). Residues 563-593 (QVNREMMEIIENFKKSEEEADASISEEEEEE) are a coiled coil. The segment at 575–617 (FKKSEEEADASISEEEEEESEPPTKKIKMDNNSVGGSGTSLSA) is disordered. Over residues 580–595 (EEADASISEEEEEESE) the composition is skewed to acidic residues. A compositionally biased stretch (polar residues) spans 604–617 (DNNSVGGSGTSLSA).

As to expression, expressed in inflorescences and leaves.

The protein localises to the nucleus. The catalysed reaction is S-ubiquitinyl-[E2 ubiquitin-conjugating enzyme]-L-cysteine + [acceptor protein]-L-lysine = [E2 ubiquitin-conjugating enzyme]-L-cysteine + N(6)-ubiquitinyl-[acceptor protein]-L-lysine.. Its pathway is protein modification; protein ubiquitination. Its function is as follows. E3 ubiquitin-protein ligase. Participates in CpG methylation-dependent transcriptional regulation and epigenetic transcriptional silencing. Mediates ubiquitination with the E2 ubiquitin-conjugating enzymes UBC11, UBC8 and UBC8 homologs (e.g. UBC10, UBC11, UBC28 and UBC29) but not with UBC27, UBC30, UBC32, UBC34 and UBC36. Promotes methylation-mediated gene silencing leading, for example, to early flowering. Can bind to CpG, CpNpG, and CpNpN DNA motifs, with a strong preference for methylated forms, and with highest affinity for CpG substrate. In Arabidopsis thaliana (Mouse-ear cress), this protein is E3 ubiquitin-protein ligase ORTHRUS 1 (ORTH1).